The sequence spans 414 residues: MTEQLQPLRGMKDLLPDDYKVHDYIINKARDVGVLYGYKQMSTPIVEYTKVFNRSMGESSDVISKEIYSFLDKSNDCVALRPEFTACIIRSIISNRLQHKLPLKFFSTGPVFRYDRPQAGRQRQFHQLNYEYIGAKGAITDADTLKLAVDILKALEIEQDTTLELNSLGCNESRRVYQQKLVEYLNDFKEQLSEESKIRLSKNPMRILDSKSETDQKIIANAPVLSEYYTDESKEYFEELIQYLDILGVKYSINPRLVRGLDYYCHTAFEFTTKKLGSQSTILAGGRYDGLAKIMGNNDDVPAIGFAAGIERIALMREYDVSEVKPVFVLPIGKNNICYALEIVDKLRTENIAIIIESLGKIAKRMQRIFNENAQFIIFIGDEEQANNNLKIKDLKKEEEYIVDFAKALELLKK.

Belongs to the class-II aminoacyl-tRNA synthetase family. As to quaternary structure, homodimer.

Its subcellular location is the cytoplasm. It carries out the reaction tRNA(His) + L-histidine + ATP = L-histidyl-tRNA(His) + AMP + diphosphate + H(+). The polypeptide is Histidine--tRNA ligase (Rickettsia rickettsii (strain Iowa)).